A 352-amino-acid chain; its full sequence is DNA polymerase IV (352 aa).

A UmuC domain is found at 4–185 (IIHVDMDCFF…LPLSKIPGVG (182 aa)). Mg(2+) is bound by residues Asp8 and Asp103. The active site involves Glu104.

This sequence belongs to the DNA polymerase type-Y family. Monomer. Mg(2+) is required as a cofactor.

The protein resides in the cytoplasm. The catalysed reaction is DNA(n) + a 2'-deoxyribonucleoside 5'-triphosphate = DNA(n+1) + diphosphate. Poorly processive, error-prone DNA polymerase involved in untargeted mutagenesis. Copies undamaged DNA at stalled replication forks, which arise in vivo from mismatched or misaligned primer ends. These misaligned primers can be extended by PolIV. Exhibits no 3'-5' exonuclease (proofreading) activity. May be involved in translesional synthesis, in conjunction with the beta clamp from PolIII. The protein is DNA polymerase IV of Yersinia pestis bv. Antiqua (strain Antiqua).